A 209-amino-acid chain; its full sequence is Adenylate kinase (209 aa).

An ATP-binding site is contributed by 10–15; it reads GAGKGT. The segment at 30–59 is NMP; the sequence is STGDLFRAAIKEQTDLGKKVKAVIDSGALV. Residues T31, R36, 57-59, 85-88, and Q92 each bind AMP; these read ALV and GFPR. Residues 121 to 158 are LID; sequence GRRVCSSCGQSFHIEFVKPKKEGICDSCSGDLMIRPDD. R122 serves as a coordination point for ATP. Zn(2+) is bound by residues C125 and C128. ATP is bound at residue 131 to 132; sequence SF. Positions 145 and 148 each coordinate Zn(2+). Positions 155 and 166 each coordinate AMP. ATP is bound at residue P194.

This sequence belongs to the adenylate kinase family. Monomer.

It is found in the cytoplasm. The catalysed reaction is AMP + ATP = 2 ADP. It functions in the pathway purine metabolism; AMP biosynthesis via salvage pathway; AMP from ADP: step 1/1. Catalyzes the reversible transfer of the terminal phosphate group between ATP and AMP. Plays an important role in cellular energy homeostasis and in adenine nucleotide metabolism. This Treponema denticola (strain ATCC 35405 / DSM 14222 / CIP 103919 / JCM 8153 / KCTC 15104) protein is Adenylate kinase.